A 427-amino-acid polypeptide reads, in one-letter code: 3-phosphoshikimate 1-carboxyvinyltransferase (427 aa).

The 3-phosphoshikimate site is built by lysine 22, serine 23, and arginine 27. Lysine 22 serves as a coordination point for phosphoenolpyruvate. Phosphoenolpyruvate contacts are provided by glycine 96 and arginine 124. Positions 169, 170, 171, 197, 313, 336, and 340 each coordinate 3-phosphoshikimate. Glutamine 171 is a phosphoenolpyruvate binding site. The active-site Proton acceptor is the aspartate 313. Positions 344, 386, and 411 each coordinate phosphoenolpyruvate.

It belongs to the EPSP synthase family. In terms of assembly, monomer.

The protein resides in the cytoplasm. The enzyme catalyses 3-phosphoshikimate + phosphoenolpyruvate = 5-O-(1-carboxyvinyl)-3-phosphoshikimate + phosphate. It functions in the pathway metabolic intermediate biosynthesis; chorismate biosynthesis; chorismate from D-erythrose 4-phosphate and phosphoenolpyruvate: step 6/7. In terms of biological role, catalyzes the transfer of the enolpyruvyl moiety of phosphoenolpyruvate (PEP) to the 5-hydroxyl of shikimate-3-phosphate (S3P) to produce enolpyruvyl shikimate-3-phosphate and inorganic phosphate. This is 3-phosphoshikimate 1-carboxyvinyltransferase from Escherichia coli O8 (strain IAI1).